Reading from the N-terminus, the 360-residue chain is Protein Wnt-2 (360 aa).

Positions 1 to 25 are cleaved as a signal peptide; that stretch reads MNAPVGGIWLWLPLLLTWLSPEVSS. Cystine bridges form between Cys-76–Cys-87, Cys-127–Cys-135, Cys-137–Cys-157, Cys-206–Cys-220, Cys-208–Cys-215, Cys-278–Cys-309, Cys-294–Cys-304, Cys-308–Cys-348, Cys-324–Cys-339, Cys-326–Cys-336, and Cys-331–Cys-332. Ser-212 carries the O-palmitoleoyl serine; by PORCN lipid modification. N-linked (GlcNAc...) asparagine glycosylation is present at Asn-295.

Belongs to the Wnt family. In terms of processing, palmitoleoylation is required for efficient binding to frizzled receptors. Depalmitoleoylation leads to Wnt signaling pathway inhibition.

Its subcellular location is the secreted. The protein localises to the extracellular space. It localises to the extracellular matrix. Functionally, ligand for members of the frizzled family of seven transmembrane receptors. Probable developmental protein. May be a signaling molecule which affects the development of discrete regions of tissues. Is likely to signal over only few cell diameters. The protein is Protein Wnt-2 (WNT2) of Rhinolophus ferrumequinum (Greater horseshoe bat).